Consider the following 486-residue polypeptide: Cysteine--tRNA ligase (486 aa).

Zn(2+) is bound at residue cysteine 29. The short motif at 31–41 (VTVYDYCHLGH) is the 'HIGH' region element. Zn(2+) is bound by residues cysteine 214, histidine 239, and glutamate 243. Positions 271–275 (KMSKS) match the 'KMSKS' region motif. Lysine 274 contacts ATP.

It belongs to the class-I aminoacyl-tRNA synthetase family. Monomer. Zn(2+) is required as a cofactor.

It localises to the cytoplasm. It carries out the reaction tRNA(Cys) + L-cysteine + ATP = L-cysteinyl-tRNA(Cys) + AMP + diphosphate. The protein is Cysteine--tRNA ligase of Nostoc sp. (strain PCC 7120 / SAG 25.82 / UTEX 2576).